The chain runs to 156 residues: S-ribosylhomocysteine lyase (156 aa).

3 residues coordinate Fe cation: His56, His60, and Cys123.

This sequence belongs to the LuxS family. Homodimer. Requires Fe cation as cofactor.

It catalyses the reaction S-(5-deoxy-D-ribos-5-yl)-L-homocysteine = (S)-4,5-dihydroxypentane-2,3-dione + L-homocysteine. Its function is as follows. Involved in the synthesis of autoinducer 2 (AI-2) which is secreted by bacteria and is used to communicate both the cell density and the metabolic potential of the environment. The regulation of gene expression in response to changes in cell density is called quorum sensing. Catalyzes the transformation of S-ribosylhomocysteine (RHC) to homocysteine (HC) and 4,5-dihydroxy-2,3-pentadione (DPD). In Staphylococcus aureus (strain Mu3 / ATCC 700698), this protein is S-ribosylhomocysteine lyase.